The primary structure comprises 309 residues: Protein FdhE (309 aa).

It belongs to the FdhE family.

The protein resides in the cytoplasm. Its function is as follows. Necessary for formate dehydrogenase activity. The polypeptide is Protein FdhE (Shigella boydii serotype 18 (strain CDC 3083-94 / BS512)).